Consider the following 349-residue polypeptide: Protein-glutamate methylesterase/protein-glutamine glutaminase 1 (349 aa).

The 118-residue stretch at 2–119 (RTLIVDDSAF…DVNKAEKELV (118 aa)) folds into the Response regulatory domain. A 4-aspartylphosphate modification is found at Asp53. Positions 158 to 345 (ILIGSSTGGP…EEIVKRLEAK (188 aa)) constitute a CheB-type methylesterase domain. Catalysis depends on residues Ser163, His190, and Asp287.

This sequence belongs to the CheB family. Phosphorylated by CheA. Phosphorylation of the N-terminal regulatory domain activates the methylesterase activity.

The protein localises to the cytoplasm. It catalyses the reaction [protein]-L-glutamate 5-O-methyl ester + H2O = L-glutamyl-[protein] + methanol + H(+). The enzyme catalyses L-glutaminyl-[protein] + H2O = L-glutamyl-[protein] + NH4(+). Its function is as follows. Involved in chemotaxis. Part of a chemotaxis signal transduction system that modulates chemotaxis in response to various stimuli. Catalyzes the demethylation of specific methylglutamate residues introduced into the chemoreceptors (methyl-accepting chemotaxis proteins or MCP) by CheR. Also mediates the irreversible deamidation of specific glutamine residues to glutamic acid. The protein is Protein-glutamate methylesterase/protein-glutamine glutaminase 1 of Methanosarcina acetivorans (strain ATCC 35395 / DSM 2834 / JCM 12185 / C2A).